A 548-amino-acid chain; its full sequence is Probable malate:quinone oxidoreductase (548 aa).

Belongs to the MQO family. FAD serves as cofactor.

It carries out the reaction (S)-malate + a quinone = a quinol + oxaloacetate. Its pathway is carbohydrate metabolism; tricarboxylic acid cycle; oxaloacetate from (S)-malate (quinone route): step 1/1. In Escherichia coli O6:K15:H31 (strain 536 / UPEC), this protein is Probable malate:quinone oxidoreductase.